The chain runs to 771 residues: Nitrogen regulation protein NtrY (771 aa).

4 helical membrane passes run 22-46 (FGLF…ILMG), 56-76 (VVIS…AMVG), 99-122 (IVGL…SLTL), and 295-319 (VAFA…GLNF). Residues 321 to 374 (KWLVAPIRRLMSAADHVAEGNLDVRVPIYRAEGDLASLAETFNKMTHELRSQRE) form the HAMP domain. The 73-residue stretch at 386 to 458 (RRRFTEAVLS…HARQRSVQGN (73 aa)) folds into the PAS domain. The Histidine kinase domain maps to 511–728 (RIAHEIKNPL…WIRLTLKAEG (218 aa)). Position 514 is a phosphohistidine; by autocatalysis (His514). Residues 727–771 (EGPKAEPTDASTKATGAATPAAPAASAMARDAAADSAARGKNERT) are disordered. Over residues 740 to 763 (ATGAATPAAPAASAMARDAAADSA) the composition is skewed to low complexity.

The protein resides in the cell membrane. The enzyme catalyses ATP + protein L-histidine = ADP + protein N-phospho-L-histidine.. Its function is as follows. Member of the two-component regulatory system NtrY/NtrX involved in nitrogen level control. Probably activates NtrX by phosphorylation. The polypeptide is Nitrogen regulation protein NtrY (ntrY) (Azorhizobium caulinodans (strain ATCC 43989 / DSM 5975 / JCM 20966 / LMG 6465 / NBRC 14845 / NCIMB 13405 / ORS 571)).